The sequence spans 1404 residues: Proteoglycan 4 (1404 aa).

Residues 1–24 form the signal peptide; it reads MAWKTLPIYLLLLLSVFVIQQVSS. SMB domains are found at residues 26 to 69 and 66 to 108; these read DLSS…AELS and AELS…AEVH. Cystine bridges form between C30-C34, C30-C46, C34-C64, C44-C46, C44-C57, C50-C56, C57-C64, C70-C74, C70-C86, C74-C104, C84-C86, C84-C97, C90-C96, and C97-C104. The tract at residues 111–966 is disordered; that stretch reads TSPPSSKKAP…TTQVTSTTTQ (856 aa). O-linked (GalNAc...) serine glycosylation is found at S123 and S136. Basic residues predominate over residues 132 to 146; it reads TTKRSPKPPNKKKTK. A compositionally biased stretch (low complexity) spans 166–177; that stretch reads SSSSSSSSSSSS. Basic and acidic residues predominate over residues 193 to 205; it reads ELQKKLKVKDNKK. An N-linked (GlcNAc...) asparagine glycan is attached at N206. Over residues 235–252 the composition is skewed to polar residues; that stretch reads TPDTSTTQHNKVSTSPKI. O-linked (GalNAc...) threonine glycosylation is found at T240 and T253. Residues 266 to 276 show a composition bias toward polar residues; it reads PNSDTSKETSL. Residues T277, T291, and T305 are each glycosylated (O-linked (GalNAc...) threonine). An O-linked (GalNAc...) serine glycan is attached at S306. T310 carries O-linked (GalNAc...) threonine glycosylation. O-linked (GalNAc...) serine glycosylation is present at S317. T324, T332, and T338 each carry an O-linked (GalNAc...) threonine glycan. Composition is skewed to low complexity over residues 329–348 and 356–405; these read AKPTPKAETTTKGPALTTPK and KEPA…KEPA. Repeat 1 spans residues 348–355; sequence KEPTPTTP. Residues 348 to 855 form a 59 X 8 AA repeats of K-X-P-X-P-T-T-X region; that stretch reads KEPTPTTPKE…TPETPPPTTS (508 aa). Residues 356-363 form a 2; approximate repeat; that stretch reads KEPASTTP. Copy 3 of the repeat occupies 364-371; sequence KEPTPTTI. Residue T367 is glycosylated (O-linked (GalNAc...) threonine). The 4; approximate repeat unit spans residues 372-378; sequence KSAPTTP. Residue S373 is glycosylated (O-linked (GalNAc...) serine). O-linked (GalNAc...) threonine glycosylation is found at T376, T384, and T385. Repeat unit 5 spans residues 379–386; the sequence is KEPAPTTT. Residues 387–393 form a 6; approximate repeat; the sequence is KSAPTTP. O-linked (GalNAc...) serine glycosylation occurs at S388. T391, T399, T400, T407, T408, T415, and T423 each carry an O-linked (GalNAc...) threonine glycan. A run of 4 repeats spans residues 394-401, 402-409, 410-417, and 418-425. The span at 413 to 431 shows a compositional bias: low complexity; the sequence is APTTTKEPAPTTTKSAPTT. An 11; approximate repeat occupies 426–432; sequence KSAPTTP. O-linked (GalNAc...) serine glycosylation occurs at S427. O-linked (GalNAc...) threonine glycans are attached at residues T430, T438, T439, T446, T447, T454, and T455. Pro residues-rich tracts occupy residues 432–467 and 476–506; these read PKEPAPTTPKKPAPTTPKEPAPTTPKEPTPTTPKEP and PTTPKEPAPTAPKKPAPTTPKEPAPTTPKEP. Repeat copies occupy residues 433–440, 441–448, 449–456, and 457–464. Residues 465-471 form a 16; approximate repeat; it reads KEPAPTT. Repeat unit 17 spans residues 472-479; it reads KEPAPTTP. 8 O-linked (GalNAc...) threonine glycosylation sites follow: T477, T478, T485, T493, T494, T501, T502, and T509. One copy of the 18; approximate repeat lies at 480 to 487; sequence KEPAPTAP. The stretch at 488–495 is one 19; approximate repeat; that stretch reads KKPAPTTP. A run of 4 repeats spans residues 496 to 503, 504 to 511, 512 to 519, and 520 to 527. Over residues 523 to 561 the composition is skewed to low complexity; it reads APTTTKSAPTTTKEPAPTTTKSAPTTPKEPSPTTTKEPA. A glycan (O-linked (GalNAc...) threonine) is linked at T525. A 24; approximate repeat occupies 528 to 534; it reads KSAPTTT. S529 carries an O-linked (GalNAc...) serine glycan. O-linked (GalNAc...) threonine glycans are attached at residues T532, T540, and T541. Copy 25 of the repeat occupies 535-542; sequence KEPAPTTT. A 26; approximate repeat occupies 543–549; that stretch reads KSAPTTP. A run of 6 repeats spans residues 550 to 557, 558 to 565, 566 to 573, 574 to 581, 582 to 589, and 590 to 597. O-linked (GalNAc...) serine glycosylation occurs at S553. T555, T563, T564, T571, T572, T579, T580, T587, T588, T595, T603, T604, T611, T612, T616, T619, and T627 each carry an O-linked (GalNAc...) threonine glycan. Residues 562–592 are compositionally biased toward pro residues; the sequence is PTTPKEPAPTTPKKPAPTTPKEPAPTTPKEP. The 33; approximate repeat unit spans residues 598–605; that stretch reads KKPAPTTP. Positions 602 to 611 are enriched in pro residues; it reads PTTPKEPAPT. Repeat 34 spans residues 606 to 613; sequence KEPAPTTP. Residues 612 to 636 show a composition bias toward low complexity; the sequence is TPKETAPTTPKKLTPTTPEKLAPTT. The stretch at 614 to 621 is one 35; approximate repeat; the sequence is KETAPTTP. A 36; approximate repeat occupies 622–629; it reads KKLTPTTP. Residues 638–645 form a 37; approximate repeat; the sequence is EKPAPTTP. Positions 653–667 are enriched in pro residues; that stretch reads PEEPTPTTPEEPAPT. A 38; approximate repeat occupies 662–669; that stretch reads EEPAPTTP. T676, T683, T684, T691, T692, T699, T700, T704, and T707 each carry an O-linked (GalNAc...) threonine glycan. Pro residues predominate over residues 677–699; sequence PKEPAPTTPKEPAPTTPKEPAPT. Repeat copies occupy residues 678–685, 686–693, and 694–701. The segment covering 700–721 has biased composition (low complexity); sequence TPKETAPTTPKGTAPTTLKEPA. The 42; approximate repeat unit spans residues 702 to 709; the sequence is KETAPTTP. Residues 710–717 form a 43; approximate repeat; sequence KGTAPTTL. Residues 718–725 form repeat 44; sequence KEPAPTTP. 3 O-linked (GalNAc...) threonine glycosylation sites follow: T723, T724, and T736. Over residues 728–761 the composition is skewed to low complexity; it reads PAPKELAPTTTKEPTSTTSDKPAPTTPKGTAPTT. The stretch at 731–738 is one 45; approximate repeat; it reads KELAPTTT. The 46; approximate repeat unit spans residues 739–746; the sequence is KEPTSTTS. The stretch at 747-754 is one 47; approximate repeat; the sequence is DKPAPTTP. Residues 755–762 form a 48; approximate repeat; sequence KGTAPTTP. Over residues 762-776 the composition is skewed to pro residues; sequence PKEPAPTTPKEPAPT. 2 repeat units span residues 763 to 770 and 771 to 778. O-linked (GalNAc...) threonine glycans are attached at residues T768, T769, T776, and T777. Residues 777–790 are compositionally biased toward low complexity; that stretch reads TPKGTAPTTLKEPA. A 51; approximate repeat occupies 779–786; that stretch reads KGTAPTTL. Residues 787–794 form repeat 52; that stretch reads KEPAPTTP. 3 O-linked (GalNAc...) threonine glycosylation sites follow: T792, T793, and T805. Over residues 797-830 the composition is skewed to low complexity; the sequence is PAPKELAPTTTKGPTSTTSDKPAPTTPKETAPTT. A 53; approximate repeat occupies 800-807; that stretch reads KELAPTTT. The 54; approximate repeat unit spans residues 808–815; it reads KGPTSTTS. S812 carries O-linked (GalNAc...) serine glycosylation. The stretch at 816-823 is one 55; approximate repeat; sequence DKPAPTTP. Residues 824 to 831 form a 56; approximate repeat; the sequence is KETAPTTP. O-linked (GalNAc...) threonine glycosylation is found at T829, T837, and T838. A compositionally biased stretch (pro residues) spans 831-853; that stretch reads PKEPAPTTPKKPAPTTPETPPPT. Tandem repeats lie at residues 832 to 839 and 840 to 847. The stretch at 848–855 is one 59; approximate repeat; sequence ETPPPTTS. The span at 854-866 shows a compositional bias: low complexity; that stretch reads TSEVSTPTTTKEP. Residue S892 is glycosylated (O-linked (GalNAc...) serine). Over residues 899–914 the composition is skewed to low complexity; that stretch reads PTTKTPAATKPEMTTT. T900 is a glycosylation site (O-linked (GalNAc...) threonine). Residues 915 to 926 are compositionally biased toward basic and acidic residues; the sequence is AKDKTTERDLRT. The segment covering 927–966 has biased composition (low complexity); that stretch reads TPETTTAAPKMTKETATTTEKTTESKITATTTQVTSTTTQ. O-linked (GalNAc...) threonine glycans are attached at residues T930 and T931. S962 carries O-linked (GalNAc...) serine glycosylation. T963, T968, T975, T978, T979, and T980 each carry an O-linked (GalNAc...) threonine glycan. A disordered region spans residues 992–1104; the sequence is ITTTEIMNKP…EDAGGAEGET (113 aa). Positions 999 to 1012 are enriched in basic and acidic residues; sequence NKPEETAKPKDRAT. Positions 1026 to 1047 are enriched in basic residues; it reads KAPKKPTSTKKPKTMPRVRKPK. T1039 carries O-linked (GalNAc...) threonine glycosylation. Residues 1048–1060 show a composition bias toward low complexity; the sequence is TTPTPRKMTSTMP. A compositionally biased stretch (polar residues) spans 1073–1085; that stretch reads LQTTTRPNQTPNS. A disulfide bridge connects residues C1146 and C1403. 2 Hemopexin repeats span residues 1148–1191 and 1192–1239; these read GKPV…VWGI and PSPI…FGGL. N1159 is a glycosylation site (N-linked (GlcNAc...) asparagine). T1161 carries O-linked (GalNAc...) threonine glycosylation.

Homodimer; disulfide-linked. Post-translationally, N-glycosylated. In terms of processing, O-glycosylated; contains glycosaminoglycan chondroitin sulfate and keratan sulfate. O-glycosylated with sialylated oligosaccharides which are predominantly represented by the monosialylated core type I structure, NeuNAcalpha2-3Galbeta1-3GalNAc, with smaller amounts of disialylated O-glycans. The disulfide bond between Cys-1146 and Cys-1403 is essential for protein cleavage. Post-translationally, proteolytically cleaved by cathepsin CTSG. As to expression, highly expressed in synovial tissue, cartilage and liver and weakly in heart and lung. Isoform B is expressed in kidney, lung, liver, heart and brain. Isoform C and isoform D are widely expressed.

The protein localises to the secreted. Its function is as follows. Plays a role in boundary lubrication within articulating joints. Prevents protein deposition onto cartilage from synovial fluid by controlling adhesion-dependent synovial growth and inhibiting the adhesion of synovial cells to the cartilage surface. Functionally, isoform F plays a role as a growth factor acting on the primitive cells of both hematopoietic and endothelial cell lineages. This Homo sapiens (Human) protein is Proteoglycan 4 (PRG4).